The sequence spans 255 residues: Putative glutamine amidotransferase YafJ (255 aa).

Cys-2 acts as the For GATase activity in catalysis. One can recognise a Glutamine amidotransferase type-2 domain in the interval 2–251; the sequence is CELLGMSANV…PGEWRLFCLG (250 aa).

The chain is Putative glutamine amidotransferase YafJ (yafJ) from Escherichia coli (strain K12).